A 261-amino-acid chain; its full sequence is [LysW]-aminoadipate/[LysW]-glutamate kinase (261 aa).

Residues 35 to 36 (GG), Arg-62, and Asn-166 each bind substrate.

Belongs to the acetylglutamate kinase family. LysZ subfamily.

The protein resides in the cytoplasm. The enzyme catalyses [amino-group carrier protein]-C-terminal-N-(1,4-dicarboxybutan-1-yl)-L-glutamine + ATP = [amino-group carrier protein]-C-terminal-N-(1-carboxy-5-phosphooxy-5-oxopentan-1-yl)-L-glutamine + ADP. The catalysed reaction is [amino-group carrier protein]-C-terminal-gamma-(L-glutamyl)-L-glutamate + ATP = [amino-group carrier protein]-C-terminal-gamma-(5-phospho-L-glutamyl)-L-glutamate + ADP. It functions in the pathway amino-acid biosynthesis; L-lysine biosynthesis via AAA pathway; L-lysine from L-alpha-aminoadipate (Thermus route): step 2/5. The protein operates within amino-acid biosynthesis; L-arginine biosynthesis. Involved in both the arginine and lysine biosynthetic pathways. Phosphorylates the LysW-bound precursors glutamate (for arginine biosynthesis), respectively alpha-aminoadipate (for lysine biosynthesis). The chain is [LysW]-aminoadipate/[LysW]-glutamate kinase from Sulfurisphaera tokodaii (strain DSM 16993 / JCM 10545 / NBRC 100140 / 7) (Sulfolobus tokodaii).